The sequence spans 508 residues: Photosystem II CP47 reaction center protein (508 aa).

6 helical membrane passes run 21–36 (AVHI…WAGS), 101–115 (IILS…IWHW), 140–156 (GIHL…FGAF), 203–218 (IAAG…FHLS), 237–252 (VLSS…AFIV), and 457–472 (CFAL…HGAR).

Belongs to the PsbB/PsbC family. PsbB subfamily. In terms of assembly, PSII is composed of 1 copy each of membrane proteins PsbA, PsbB, PsbC, PsbD, PsbE, PsbF, PsbH, PsbI, PsbJ, PsbK, PsbL, PsbM, PsbT, PsbX, PsbY, PsbZ, Psb30/Ycf12, at least 3 peripheral proteins of the oxygen-evolving complex and a large number of cofactors. It forms dimeric complexes. Binds multiple chlorophylls. PSII binds additional chlorophylls, carotenoids and specific lipids. serves as cofactor.

Its subcellular location is the plastid. The protein localises to the chloroplast thylakoid membrane. One of the components of the core complex of photosystem II (PSII). It binds chlorophyll and helps catalyze the primary light-induced photochemical processes of PSII. PSII is a light-driven water:plastoquinone oxidoreductase, using light energy to abstract electrons from H(2)O, generating O(2) and a proton gradient subsequently used for ATP formation. This is Photosystem II CP47 reaction center protein from Chara vulgaris (Common stonewort).